The primary structure comprises 199 residues: Probable thymidylate kinase (199 aa).

Position 13–20 (13–20) interacts with ATP; the sequence is GIDGAGKT.

This sequence belongs to the thymidylate kinase family.

The enzyme catalyses dTMP + ATP = dTDP + ADP. This is Probable thymidylate kinase from Staphylothermus marinus (strain ATCC 43588 / DSM 3639 / JCM 9404 / F1).